The primary structure comprises 383 residues: Chitinase-3-like protein 1 (383 aa).

The first 21 residues, 1 to 21 (MGLRASGTGFVVLVLLQSCAA), serve as a signal peptide directing secretion. The GH18 domain maps to 22–383 (YKLICYYTSW…SAVKDVLAEV (362 aa)). Cysteine 26 and cysteine 51 form a disulfide bridge. Asparagine 60 carries an N-linked (GlcNAc...) asparagine glycan. Chitin is bound by residues 70–71 (EW), 97–100 (GGWN), tyrosine 141, 204–207 (LTYD), and arginine 263. Cysteine 300 and cysteine 364 are joined by a disulfide. Positions 324 to 338 (QWVAYDDQESVKNKA) are important for AKT1 activation and IL8 production. Chitin is bound at residue tryptophan 352. N-linked (GlcNAc...) asparagine glycosylation is present at asparagine 367.

The protein belongs to the glycosyl hydrolase 18 family. In terms of assembly, monomer.

Its subcellular location is the secreted. The protein resides in the extracellular space. It is found in the cytoplasm. The protein localises to the perinuclear region. It localises to the endoplasmic reticulum. Its function is as follows. Carbohydrate-binding lectin with a preference for chitin. Has no chitinase activity. May play a role in tissue remodeling and in the capacity of cells to respond to and cope with changes in their environment. Plays a role in T-helper cell type 2 (Th2) inflammatory response and IL-13-induced inflammation, regulating allergen sensitization, inflammatory cell apoptosis, dendritic cell accumulation and M2 macrophage differentiation. Facilitates invasion of pathogenic enteric bacteria into colonic mucosa and lymphoid organs. Mediates activation of AKT1 signaling pathway and subsequent IL8 production in colonic epithelial cells. Regulates antibacterial responses in lung by contributing to macrophage bacterial killing, controlling bacterial dissemination and augmenting host tolerance. Also regulates hyperoxia-induced injury, inflammation and epithelial apoptosis in lung. The sequence is that of Chitinase-3-like protein 1 (CHI3L1) from Capra hircus (Goat).